The following is a 514-amino-acid chain: Coiled-coil domain-containing protein 174 (514 aa).

Disordered regions lie at residues 42-83 (AKPK…DQSR) and 137-162 (TLEK…PDEE). The segment covering 63–83 (KRAEKDIEQKAEEDQTLDQSR) has biased composition (basic and acidic residues). Residues 66–98 (EKDIEQKAEEDQTLDQSRKKLEEKAKLYEKMTK) are a coiled coil. Positions 141–162 (ETDDEEIEPEMEIPPPEDPDEE) are enriched in acidic residues. 2 coiled-coil regions span residues 203-227 (LLSE…ALRK) and 266-321 (LDML…LENG). Disordered stretches follow at residues 270–291 (REQT…KAAL) and 306–490 (LREE…PSAH). Composition is skewed to basic and acidic residues over residues 335–354 (EVPR…RDTK) and 376–388 (KKQE…RDPE). Over residues 405-418 (YSSQNLNSPETSPG) the composition is skewed to polar residues. Positions 420–429 (TEPEISENQK) are enriched in basic and acidic residues.

The protein localises to the nucleus. Its function is as follows. Probably involved in neuronal development. In Gallus gallus (Chicken), this protein is Coiled-coil domain-containing protein 174 (CCDC174).